The following is a 177-amino-acid chain: Large ribosomal subunit protein uL10 (177 aa).

Belongs to the universal ribosomal protein uL10 family. In terms of assembly, part of the ribosomal stalk of the 50S ribosomal subunit. The N-terminus interacts with L11 and the large rRNA to form the base of the stalk. The C-terminus forms an elongated spine to which L12 dimers bind in a sequential fashion forming a multimeric L10(L12)X complex.

Functionally, forms part of the ribosomal stalk, playing a central role in the interaction of the ribosome with GTP-bound translation factors. This chain is Large ribosomal subunit protein uL10, found in Thermoanaerobacter sp. (strain X514).